Reading from the N-terminus, the 174-residue chain is Protein MOTHER of FT and TFL1 homolog 2 (174 aa).

This sequence belongs to the phosphatidylethanolamine-binding protein family.

Its function is as follows. May form complexes with phosphorylated ligands by interfering with kinases and their effectors. This chain is Protein MOTHER of FT and TFL1 homolog 2, found in Oryza sativa subsp. japonica (Rice).